Here is a 230-residue protein sequence, read N- to C-terminus: Large ribosomal subunit protein uL1 (230 aa).

Belongs to the universal ribosomal protein uL1 family. As to quaternary structure, part of the 50S ribosomal subunit.

In terms of biological role, binds directly to 23S rRNA. The L1 stalk is quite mobile in the ribosome, and is involved in E site tRNA release. Its function is as follows. Protein L1 is also a translational repressor protein, it controls the translation of the L11 operon by binding to its mRNA. This chain is Large ribosomal subunit protein uL1, found in Nitrobacter hamburgensis (strain DSM 10229 / NCIMB 13809 / X14).